The chain runs to 804 residues: Phenylalanine--tRNA ligase beta subunit (804 aa).

A tRNA-binding domain is found at 39–155; sequence EEGLKKLVVG…ADVKPGQDVY (117 aa). In terms of domain architecture, B5 spans 408 to 483; that stretch reads REPVVVKTTV…RIYGYDNLKS (76 aa). Mg(2+) is bound by residues Asp-461, Asp-467, Glu-470, and Glu-471. The region spanning 711–804 is the FDX-ACB domain; sequence PKFPAIERDL…LENDLDIKVR (94 aa).

The protein belongs to the phenylalanyl-tRNA synthetase beta subunit family. Type 1 subfamily. Tetramer of two alpha and two beta subunits. It depends on Mg(2+) as a cofactor.

Its subcellular location is the cytoplasm. The enzyme catalyses tRNA(Phe) + L-phenylalanine + ATP = L-phenylalanyl-tRNA(Phe) + AMP + diphosphate + H(+). This chain is Phenylalanine--tRNA ligase beta subunit, found in Lactobacillus acidophilus (strain ATCC 700396 / NCK56 / N2 / NCFM).